Consider the following 248-residue polypeptide: MRFTLVGNGRMGQQVALVIAQSGCHETAAVLDINTAITPDLFQGSDAIIDFTVREAFFANLPAMLESGVPIVVGTTGWDDLRDEIEVKVSDAGASLLYSANFSLGVNIFLRTVREAARLIAPFGQFDIAFAEQHHTAKADFPSGTALRAADMILSANSRKKSVVRQLSDDKKLAPDELQVASLRLGSVFGKHSAFIDSDADEIVISHTAKSRSGFAAGAVEAAIWLARRHTTAPGFYTMDDFLNETFS.

NAD(+) is bound by residues D32, 74 to 76 (GTT), and 99 to 102 (SANF). Residue H134 is the Proton donor/acceptor of the active site. H135 is a binding site for (S)-2,3,4,5-tetrahydrodipicolinate. The active-site Proton donor is the K138. 144 to 145 (GT) provides a ligand contact to (S)-2,3,4,5-tetrahydrodipicolinate.

It belongs to the DapB family.

It localises to the cytoplasm. The enzyme catalyses (S)-2,3,4,5-tetrahydrodipicolinate + NAD(+) + H2O = (2S,4S)-4-hydroxy-2,3,4,5-tetrahydrodipicolinate + NADH + H(+). The catalysed reaction is (S)-2,3,4,5-tetrahydrodipicolinate + NADP(+) + H2O = (2S,4S)-4-hydroxy-2,3,4,5-tetrahydrodipicolinate + NADPH + H(+). It participates in amino-acid biosynthesis; L-lysine biosynthesis via DAP pathway; (S)-tetrahydrodipicolinate from L-aspartate: step 4/4. Catalyzes the conversion of 4-hydroxy-tetrahydrodipicolinate (HTPA) to tetrahydrodipicolinate. The chain is 4-hydroxy-tetrahydrodipicolinate reductase from Pelodictyon phaeoclathratiforme (strain DSM 5477 / BU-1).